The primary structure comprises 536 residues: Bifunctional purine biosynthesis protein PurH (536 aa).

The region spanning 8–158 (IPAPDEVRIQ…KNHAYVTIVT (151 aa)) is the MGS-like domain.

Belongs to the PurH family.

The catalysed reaction is (6R)-10-formyltetrahydrofolate + 5-amino-1-(5-phospho-beta-D-ribosyl)imidazole-4-carboxamide = 5-formamido-1-(5-phospho-D-ribosyl)imidazole-4-carboxamide + (6S)-5,6,7,8-tetrahydrofolate. The enzyme catalyses IMP + H2O = 5-formamido-1-(5-phospho-D-ribosyl)imidazole-4-carboxamide. It functions in the pathway purine metabolism; IMP biosynthesis via de novo pathway; 5-formamido-1-(5-phospho-D-ribosyl)imidazole-4-carboxamide from 5-amino-1-(5-phospho-D-ribosyl)imidazole-4-carboxamide (10-formyl THF route): step 1/1. Its pathway is purine metabolism; IMP biosynthesis via de novo pathway; IMP from 5-formamido-1-(5-phospho-D-ribosyl)imidazole-4-carboxamide: step 1/1. This chain is Bifunctional purine biosynthesis protein PurH, found in Sinorhizobium fredii (strain NBRC 101917 / NGR234).